Consider the following 277-residue polypeptide: Phosphatidylglycerol--prolipoprotein diacylglyceryl transferase (277 aa).

The next 4 helical transmembrane spans lie at 18-38, 54-74, 91-111, and 115-135; these read IAIYWYAVLILLGVAVGYFMA, DLLVWALPISILSARAYYVIF, EGGIAIHGALIGAVVTAIVFA, and GLSFWKLADVAAPSILIGQAI. R137 contributes to the a 1,2-diacyl-sn-glycero-3-phospho-(1'-sn-glycerol) binding site. 3 helical membrane passes run 177–197, 205–225, and 236–256; these read QPTFLYESLWNVLGVVVLLLL, GELFLSYVIWYSVGRFVIEGM, and LRTAQLLSIILVVAAIALWVY.

This sequence belongs to the Lgt family.

It is found in the cell membrane. It catalyses the reaction L-cysteinyl-[prolipoprotein] + a 1,2-diacyl-sn-glycero-3-phospho-(1'-sn-glycerol) = an S-1,2-diacyl-sn-glyceryl-L-cysteinyl-[prolipoprotein] + sn-glycerol 1-phosphate + H(+). Its pathway is protein modification; lipoprotein biosynthesis (diacylglyceryl transfer). Its function is as follows. Catalyzes the transfer of the diacylglyceryl group from phosphatidylglycerol to the sulfhydryl group of the N-terminal cysteine of a prolipoprotein, the first step in the formation of mature lipoproteins. The chain is Phosphatidylglycerol--prolipoprotein diacylglyceryl transferase from Shouchella clausii (strain KSM-K16) (Alkalihalobacillus clausii).